The chain runs to 317 residues: Beta-ketoacyl-[acyl-carrier-protein] synthase III (317 aa).

Residues cysteine 112 and histidine 244 contribute to the active site. The tract at residues 245-249 (QANLR) is ACP-binding. Asparagine 274 is a catalytic residue.

Belongs to the thiolase-like superfamily. FabH family. As to quaternary structure, homodimer.

Its subcellular location is the cytoplasm. The catalysed reaction is malonyl-[ACP] + acetyl-CoA + H(+) = 3-oxobutanoyl-[ACP] + CO2 + CoA. It functions in the pathway lipid metabolism; fatty acid biosynthesis. Its function is as follows. Catalyzes the condensation reaction of fatty acid synthesis by the addition to an acyl acceptor of two carbons from malonyl-ACP. Catalyzes the first condensation reaction which initiates fatty acid synthesis and may therefore play a role in governing the total rate of fatty acid production. Possesses both acetoacetyl-ACP synthase and acetyl transacylase activities. Its substrate specificity determines the biosynthesis of branched-chain and/or straight-chain of fatty acids. The chain is Beta-ketoacyl-[acyl-carrier-protein] synthase III from Salmonella paratyphi A (strain ATCC 9150 / SARB42).